Consider the following 357-residue polypeptide: MIRVLVVDDSAFMRNMITKFLTSNHEIAVAGTARNGEEALQKIKELRPDVITLDIEMPVMNGKETLKRIMASDPLPVVMVSSLTQQGADITIECLELGAIDFVAKPSGSISIDLYKVRDMLIEKVLTAGRVKLKGRQVPISKPAIETAKQPIVGGSDSVRFRAGKQLICIGTSTGGPRALQRVLPKLPKTLKAPVFIVQHMPKGFTASLANRLNHLSEVTVKEAENGERAKDGWVYIAPGGKNMAVGLEKGELVITLDDRDTESRHKPSVDYLFQSLASLREFEKIAVIMTGMGSDGTEGVKGLLKHGSGTVIAEAAESSVVFGMPKSVINNGLANDIKHVDEIAAAIMTYMKKERA.

The Response regulatory domain occupies 3–120 (RVLVVDDSAF…SIDLYKVRDM (118 aa)). Asp-54 is modified (4-aspartylphosphate). Residues 161–355 (FRAGKQLICI…AAIMTYMKKE (195 aa)) enclose the CheB-type methylesterase domain. Active-site residues include Ser-173, His-200, and Asp-296.

This sequence belongs to the CheB family. In terms of processing, phosphorylated by CheA. Phosphorylation of the N-terminal regulatory domain activates the methylesterase activity.

The protein resides in the cytoplasm. It carries out the reaction [protein]-L-glutamate 5-O-methyl ester + H2O = L-glutamyl-[protein] + methanol + H(+). The enzyme catalyses L-glutaminyl-[protein] + H2O = L-glutamyl-[protein] + NH4(+). Its function is as follows. Involved in chemotaxis. Part of a chemotaxis signal transduction system that modulates chemotaxis in response to various stimuli. Catalyzes the demethylation of specific methylglutamate residues introduced into the chemoreceptors (methyl-accepting chemotaxis proteins or MCP) by CheR. Also mediates the irreversible deamidation of specific glutamine residues to glutamic acid. The protein is Protein-glutamate methylesterase/protein-glutamine glutaminase of Bacillus licheniformis (strain ATCC 14580 / DSM 13 / JCM 2505 / CCUG 7422 / NBRC 12200 / NCIMB 9375 / NCTC 10341 / NRRL NRS-1264 / Gibson 46).